The following is a 157-amino-acid chain: S-ribosylhomocysteine lyase (157 aa).

Positions 54, 58, and 124 each coordinate Fe cation.

It belongs to the LuxS family. In terms of assembly, homodimer. Fe cation is required as a cofactor.

The catalysed reaction is S-(5-deoxy-D-ribos-5-yl)-L-homocysteine = (S)-4,5-dihydroxypentane-2,3-dione + L-homocysteine. Its function is as follows. Involved in the synthesis of autoinducer 2 (AI-2) which is secreted by bacteria and is used to communicate both the cell density and the metabolic potential of the environment. The regulation of gene expression in response to changes in cell density is called quorum sensing. Catalyzes the transformation of S-ribosylhomocysteine (RHC) to homocysteine (HC) and 4,5-dihydroxy-2,3-pentadione (DPD). In Lactobacillus acidophilus (strain ATCC 700396 / NCK56 / N2 / NCFM), this protein is S-ribosylhomocysteine lyase.